The primary structure comprises 685 residues: UvrABC system protein B (685 aa).

The Helicase ATP-binding domain occupies 30-188 (DGVLRGDRWQ…QELVSLHYIR (159 aa)). 43–50 (GVTGSGKT) is an ATP binding site. The short motif at 96-119 (YYDFYQPEAYLPALDKYIAKDLRI) is the Beta-hairpin element. A Helicase C-terminal domain is found at 435–597 (QIDDLLAEIR…ITPRSIRKSL (163 aa)). The UVR domain maps to 641–676 (YAMVAELRLEMNEAAIQMEYEKAAYLRDEIARLMHG).

The protein belongs to the UvrB family. In terms of assembly, forms a heterotetramer with UvrA during the search for lesions. Interacts with UvrC in an incision complex.

It localises to the cytoplasm. Functionally, the UvrABC repair system catalyzes the recognition and processing of DNA lesions. A damage recognition complex composed of 2 UvrA and 2 UvrB subunits scans DNA for abnormalities. Upon binding of the UvrA(2)B(2) complex to a putative damaged site, the DNA wraps around one UvrB monomer. DNA wrap is dependent on ATP binding by UvrB and probably causes local melting of the DNA helix, facilitating insertion of UvrB beta-hairpin between the DNA strands. Then UvrB probes one DNA strand for the presence of a lesion. If a lesion is found the UvrA subunits dissociate and the UvrB-DNA preincision complex is formed. This complex is subsequently bound by UvrC and the second UvrB is released. If no lesion is found, the DNA wraps around the other UvrB subunit that will check the other stand for damage. This Chlorobium phaeobacteroides (strain DSM 266 / SMG 266 / 2430) protein is UvrABC system protein B.